The chain runs to 95 residues: Large ribosomal subunit protein uL23 (95 aa).

This sequence belongs to the universal ribosomal protein uL23 family. In terms of assembly, part of the 50S ribosomal subunit. Contacts protein L29, and trigger factor when it is bound to the ribosome.

Functionally, one of the early assembly proteins it binds 23S rRNA. One of the proteins that surrounds the polypeptide exit tunnel on the outside of the ribosome. Forms the main docking site for trigger factor binding to the ribosome. The sequence is that of Large ribosomal subunit protein uL23 from Desulforapulum autotrophicum (strain ATCC 43914 / DSM 3382 / VKM B-1955 / HRM2) (Desulfobacterium autotrophicum).